The primary structure comprises 91 residues: Small ribosomal subunit protein uS19 (91 aa).

Belongs to the universal ribosomal protein uS19 family.

Protein S19 forms a complex with S13 that binds strongly to the 16S ribosomal RNA. The chain is Small ribosomal subunit protein uS19 from Psychrobacter sp. (strain PRwf-1).